Reading from the N-terminus, the 77-residue chain is Large ribosomal subunit protein uL29 (77 aa).

The protein belongs to the universal ribosomal protein uL29 family.

The polypeptide is Large ribosomal subunit protein uL29 (Mycolicibacterium vanbaalenii (strain DSM 7251 / JCM 13017 / BCRC 16820 / KCTC 9966 / NRRL B-24157 / PYR-1) (Mycobacterium vanbaalenii)).